The primary structure comprises 200 residues: FMN-dependent NADH:quinone oxidoreductase (200 aa).

FMN is bound by residues Ser10, 96–99, and 140–143; these read MYNF and SRGG.

This sequence belongs to the azoreductase type 1 family. In terms of assembly, homodimer. Requires FMN as cofactor.

The catalysed reaction is 2 a quinone + NADH + H(+) = 2 a 1,4-benzosemiquinone + NAD(+). It carries out the reaction N,N-dimethyl-1,4-phenylenediamine + anthranilate + 2 NAD(+) = 2-(4-dimethylaminophenyl)diazenylbenzoate + 2 NADH + 2 H(+). Quinone reductase that provides resistance to thiol-specific stress caused by electrophilic quinones. In terms of biological role, also exhibits azoreductase activity. Catalyzes the reductive cleavage of the azo bond in aromatic azo compounds to the corresponding amines. The polypeptide is FMN-dependent NADH:quinone oxidoreductase (Photorhabdus laumondii subsp. laumondii (strain DSM 15139 / CIP 105565 / TT01) (Photorhabdus luminescens subsp. laumondii)).